We begin with the raw amino-acid sequence, 681 residues long: Methionine--tRNA ligase (681 aa).

A 'HIGH' region motif is present at residues 12-22 (PYANGSIHLGH). Residues Cys-143, Cys-146, Cys-156, and Cys-159 each contribute to the Zn(2+) site. Positions 327–331 (KMSKS) match the 'KMSKS' region motif. An ATP-binding site is contributed by Lys-330. The segment covering 545-557 (FEKSNPEKAKQDP) has biased composition (basic and acidic residues). Positions 545–566 (FEKSNPEKAKQDPSKSNTNEVK) are disordered. A tRNA-binding domain is found at 580-681 (ELSKVELRVG…RDASPGDLLK (102 aa)).

Belongs to the class-I aminoacyl-tRNA synthetase family. MetG type 1 subfamily. As to quaternary structure, homodimer. Requires Zn(2+) as cofactor.

It localises to the cytoplasm. It catalyses the reaction tRNA(Met) + L-methionine + ATP = L-methionyl-tRNA(Met) + AMP + diphosphate. Is required not only for elongation of protein synthesis but also for the initiation of all mRNA translation through initiator tRNA(fMet) aminoacylation. The polypeptide is Methionine--tRNA ligase (Leptospira biflexa serovar Patoc (strain Patoc 1 / ATCC 23582 / Paris)).